The chain runs to 152 residues: Putative rho GDP-dissociation inhibitor 2 (152 aa).

Belongs to the Rho GDI family.

It localises to the cytoplasm. Regulates the GDP/GTP exchange reaction of the Rho proteins by inhibiting the dissociation of GDP from them, and the subsequent binding of GTP to them. In Dictyostelium discoideum (Social amoeba), this protein is Putative rho GDP-dissociation inhibitor 2 (rdiB).